Reading from the N-terminus, the 633-residue chain is ATP-dependent RNA helicase mrh4, mitochondrial (633 aa).

A mitochondrion-targeting transit peptide spans 1 to 38 (MNRLGRLSLPLRPQVCLLCQTQATMSSPLAGWQAVRSM). A disordered region spans residues 50–115 (MVLSSNVDKS…KQKPDSPLYK (66 aa)). Residues 52–63 (LSSNVDKSSLKQ) are compositionally biased toward polar residues. Basic and acidic residues predominate over residues 98 to 109 (RSGDSEDDKQKP). Residues 142-175 (SSFDQFPLLPVVRHSISSQALSRTGDIVPTPIQR) carry the Q motif motif. Residues 195-407 (SDHEPNFEQY…RKRYPDIRRL (213 aa)) enclose the Helicase ATP-binding domain. ATP is bound at residue 208–215 (AETGSGKT). Positions 354 to 357 (DEAD) match the DEAD box motif. Positions 458 to 633 (FLAQAGPKVK…EGMFRGQALI (176 aa)) constitute a Helicase C-terminal domain.

The protein belongs to the DEAD box helicase family. MRH4 subfamily.

It localises to the mitochondrion. The enzyme catalyses ATP + H2O = ADP + phosphate + H(+). ATP-binding RNA helicase involved in mitochondrial RNA metabolism. Required for maintenance of mitochondrial DNA. This Aspergillus niger (strain ATCC MYA-4892 / CBS 513.88 / FGSC A1513) protein is ATP-dependent RNA helicase mrh4, mitochondrial (mrh4).